Consider the following 438-residue polypeptide: RNA polymerase sigma factor SigA (438 aa).

Positions 1–11 (MKKSKSKKKAA) are enriched in basic residues. Positions 1–69 (MKKSKSKKKA…PLDLEGPLEA (69 aa)) are disordered. Basic and acidic residues predominate over residues 12–26 (KAQEVEVKEPVKEPE). Composition is skewed to acidic residues over residues 27-45 (PLPE…EPDP) and 52-69 (PELE…PLEA). Residues 93–128 (SDPVRQYLHEIGQVPLLTLEEEIDLARKVEEGMEAI) form a sigma-70 factor domain-1 region. The tract at residues 202-272 (LIEANLRLVV…NRAIADQART (71 aa)) is sigma-70 factor domain-2. The Interaction with polymerase core subunit RpoC signature appears at 226–229 (DLIQ). Residues 281 to 359 (ETINKLSRTA…DENLPSPVEA (79 aa)) are sigma-70 factor domain-3. The segment at 372-424 (ALSKLSEREAMVLKLRKGLIDGREHTLEEVGAYFGVTRERIRQIENKALRKLK) is sigma-70 factor domain-4. Residues 398–417 (LEEVGAYFGVTRERIRQIEN) constitute a DNA-binding region (H-T-H motif).

This sequence belongs to the sigma-70 factor family. RpoD/SigA subfamily. In terms of assembly, interacts transiently with the RNA polymerase catalytic core formed by RpoA, RpoB, RpoC and RpoZ (2 alpha, 1 beta, 1 beta' and 1 omega subunit) to form the RNA polymerase holoenzyme that can initiate transcription.

It localises to the cytoplasm. Its function is as follows. Sigma factors are initiation factors that promote the attachment of RNA polymerase to specific initiation sites and are then released. This sigma factor is the primary sigma factor during exponential growth. This chain is RNA polymerase sigma factor SigA, found in Thermus aquaticus.